The sequence spans 181 residues: CASP-like protein 1F1 (181 aa).

Residues 1 to 18 (MPNNEAKFSVNQPLKTQK) are Cytoplasmic-facing. A helical membrane pass occupies residues 19–39 (LFIGVQIFFRIVAIAASVASS). Topologically, residues 40 to 70 (WLMITSKQVIDIGGIVLDARYSYSPEFKFLA) are extracellular. A helical membrane pass occupies residues 71–91 (FTNIVVGCFSLLSLLFLVLVV). The Cytoplasmic portion of the chain corresponds to 92 to 100 (RQGSNPNHY). The chain crosses the membrane as a helical span at residues 101 to 121 (FFLFLHDLAMMSLVVGGCAAA). The Extracellular portion of the chain corresponds to 122 to 152 (TTVGFLGKHGNSHTGWMQICDNFGKFCNRAQ). Residues 153-173 (TSVTISYLNLICLSILTITSA) traverse the membrane as a helical segment. Topologically, residues 174 to 181 (SKSRKMEA) are cytoplasmic.

This sequence belongs to the Casparian strip membrane proteins (CASP) family. As to quaternary structure, homodimer and heterodimers.

It is found in the cell membrane. The polypeptide is CASP-like protein 1F1 (Populus trichocarpa (Western balsam poplar)).